The chain runs to 96 residues: Co-chaperonin GroES (96 aa).

It belongs to the GroES chaperonin family. Heptamer of 7 subunits arranged in a ring. Interacts with the chaperonin GroEL.

Its subcellular location is the cytoplasm. In terms of biological role, together with the chaperonin GroEL, plays an essential role in assisting protein folding. The GroEL-GroES system forms a nano-cage that allows encapsulation of the non-native substrate proteins and provides a physical environment optimized to promote and accelerate protein folding. GroES binds to the apical surface of the GroEL ring, thereby capping the opening of the GroEL channel. The sequence is that of Co-chaperonin GroES from Actinobacillus pleuropneumoniae serotype 3 (strain JL03).